The primary structure comprises 579 residues: MKPPDRPTPGRTDRILGVMGGMLRACAVPGQEGPQERDPLGPGSTKTESECTEEDQTGEREREVLAWAPQPESYSIAGSEGSMSASAVSGLAALSGPSSGLSSHPCSPVPPGPVTGLRRWLDHSKHCLSVETEADSGQTRQCENWMLEPTLTTGQELPELTLLTTLLEGPGVKAQPAEEETLSQAPKNEEEQKKTALERSMFVLSELVETERMYVDDLGQIVEGYMATMATQGVPESLRGRDRIVFGNIQQIYEWHRDYFLQELQQCLKDPDWLAQLFIKHERRLHMYVVYCQNKPKSEHVLSEFGDSYFEELRQQLGHRLQLSDLLIKPVQRIMKYQLLLKDFLKYYRRAGMDTEELEQAVEVMCFVPKRCNDMMSLGRLRGFEGKLTAQGKLLGQDTFLVTEPEAGGLLSSRGRERRVFLFEQIVIFSEALGGGGRGGTQPGYVYKNSIKASDPAVSQAWIKQVAQILESQRDFLNALQSPIEYQRRESQTNSLGRSGGPGVGSPGRMAQVSMHTPINGSLPSLLLLPRGEVPRAPLPLDTQALSETPLTPYDPPALPTVNSPPGQARLAKLDEDEL.

Disordered stretches follow at residues 27–61 (AVPGQEGPQERDPLGPGSTKTESECTEEDQTGERE) and 172–194 (VKAQPAEEETLSQAPKNEEEQKK). The DH domain maps to 199-375 (RSMFVLSELV…CFVPKRCNDM (177 aa)). The interval 317 to 338 (LGHRLQLSDLLIKPVQRIMKYQ) is important for binding to Rho GTPases. Residues 380-499 (RLRGFEGKLT…ESQTNSLGRS (120 aa)) enclose the PH domain. Residues 472–498 (SQRDFLNALQSPIEYQRRESQTNSLGR) are sufficient to bind activated GNAQ. 2 disordered regions span residues 487 to 516 (QRRESQTNSLGRSGGPGVGSPGRMAQVSMH) and 546 to 579 (LSETPLTPYDPPALPTVNSPPGQARLAKLDEDEL).

Interacts with activated GNAQ and GNA11. Interacts with RHOA, CDC42 and RAC1. Interacts (via the DH domain) with POPDC1 (via the C-terminus cytoplasmic tail).

The protein localises to the cytoplasm. It localises to the myofibril. Its subcellular location is the sarcomere. The protein resides in the cell membrane. Its function is as follows. May play a role in actin cytoskeleton reorganization in different tissues since its activation induces formation of actin stress fibers. It works as a guanine nucleotide exchange factor for Rho family of small GTPases. Links specifically G alpha q/11-coupled receptors to RHOA activation. May be an important regulator of processes involved in axon and dendrite formation. In neurons seems to be an exchange factor primarily for RAC1. Involved in skeletal myogenesis. This is Rho guanine nucleotide exchange factor 25 (Arhgef25) from Rattus norvegicus (Rat).